Reading from the N-terminus, the 295-residue chain is 33 kDa chaperonin (295 aa).

2 cysteine pairs are disulfide-bonded: Cys238–Cys240 and Cys271–Cys274.

It belongs to the HSP33 family. In terms of processing, under oxidizing conditions two disulfide bonds are formed involving the reactive cysteines. Under reducing conditions zinc is bound to the reactive cysteines and the protein is inactive.

Its subcellular location is the cytoplasm. In terms of biological role, redox regulated molecular chaperone. Protects both thermally unfolding and oxidatively damaged proteins from irreversible aggregation. Plays an important role in the bacterial defense system toward oxidative stress. In Clostridium botulinum (strain Alaska E43 / Type E3), this protein is 33 kDa chaperonin.